A 122-amino-acid polypeptide reads, in one-letter code: MSKKRSSPNRNVQIADQIQRDLSELIMREVKDPRIGIVTIQSVELTPDYAHAKVYFTALTGTPADTQEALNHAAGHLHNLLFKRLHIHTVPTLHFHYDQTIEKAVAMSRLIDEANATRAKDD.

It belongs to the RbfA family. Monomer. Binds 30S ribosomal subunits, but not 50S ribosomal subunits or 70S ribosomes.

It localises to the cytoplasm. One of several proteins that assist in the late maturation steps of the functional core of the 30S ribosomal subunit. Associates with free 30S ribosomal subunits (but not with 30S subunits that are part of 70S ribosomes or polysomes). Required for efficient processing of 16S rRNA. May interact with the 5'-terminal helix region of 16S rRNA. This chain is Ribosome-binding factor A, found in Burkholderia mallei (strain NCTC 10229).